Consider the following 493-residue polypeptide: 2-amino-4-deoxychorismate synthase (493 aa).

Belongs to the anthranilate synthase component I family. The cofactor is Mg(2+).

The enzyme catalyses (2S)-2-amino-4-deoxychorismate + L-glutamate = chorismate + L-glutamine. Functionally, converts chorismate to 2-amino-4-deoxychorismate (ADIC). Involved in the biosynthesis of the benzoxazolinate moiety of the enediyne antitumor antibiotic C-1027. The polypeptide is 2-amino-4-deoxychorismate synthase (sgcD) (Streptomyces globisporus).